A 401-amino-acid polypeptide reads, in one-letter code: Flagellin D (401 aa).

This sequence belongs to the bacterial flagellin family.

Its subcellular location is the secreted. It localises to the bacterial flagellum. In terms of biological role, flagellin is the subunit protein which polymerizes to form the filaments of bacterial flagella. This is Flagellin D (flaD) from Rhizobium meliloti (strain 1021) (Ensifer meliloti).